The chain runs to 97 residues: Small ribosomal subunit protein bS6 (97 aa).

Belongs to the bacterial ribosomal protein bS6 family.

Functionally, binds together with bS18 to 16S ribosomal RNA. The polypeptide is Small ribosomal subunit protein bS6 (Listeria monocytogenes serotype 4b (strain CLIP80459)).